The following is a 430-amino-acid chain: Histidine--tRNA ligase (430 aa).

It belongs to the class-II aminoacyl-tRNA synthetase family. Homodimer.

It is found in the cytoplasm. The catalysed reaction is tRNA(His) + L-histidine + ATP = L-histidyl-tRNA(His) + AMP + diphosphate + H(+). The protein is Histidine--tRNA ligase of Acinetobacter baumannii (strain ATCC 17978 / DSM 105126 / CIP 53.77 / LMG 1025 / NCDC KC755 / 5377).